We begin with the raw amino-acid sequence, 145 residues long: Flagellar assembly factor FliW (145 aa).

This sequence belongs to the FliW family. As to quaternary structure, interacts with translational regulator CsrA and flagellin(s).

The protein resides in the cytoplasm. Acts as an anti-CsrA protein, binds CsrA and prevents it from repressing translation of its target genes, one of which is flagellin. Binds to flagellin and participates in the assembly of the flagellum. The sequence is that of Flagellar assembly factor FliW from Thermosipho africanus (strain TCF52B).